A 396-amino-acid chain; its full sequence is Anticodon nuclease (396 aa).

In terms of biological role, anticodon endonuclease (ACNase) that triggers the cleavage ligation of tRNA(Lys). It is activated by T4 stp protein and masked by the prrD protein (the endonuclease subunit of EcoprrI). The prr locus restricts phage T4 mutants lacking polynucleotide kinase or RNA ligase; T4 mutants lacking these genes manifest a T4-induced anticodon nuclease (ACNase). It is thought that Stp and other T4-encoded ACNase factors counteract the masking agents, thus activating the latent ACNase. This is Anticodon nuclease from Escherichia coli.